The sequence spans 461 residues: tRNA modification GTPase MnmE (461 aa).

(6S)-5-formyl-5,6,7,8-tetrahydrofolate is bound by residues K32, E89, and K128. Residues 224–387 (GHALSIVGKP…LSQKISEFFP (164 aa)) form the TrmE-type G domain. A K(+)-binding site is contributed by N234. Residues 234–239 (NAGKSS), 253–259 (SDIKGTT), and 278–281 (DTAG) contribute to the GTP site. S238 serves as a coordination point for Mg(2+). K(+)-binding residues include S253, I255, and T258. T259 is a Mg(2+) binding site. (6S)-5-formyl-5,6,7,8-tetrahydrofolate is bound at residue K461.

Belongs to the TRAFAC class TrmE-Era-EngA-EngB-Septin-like GTPase superfamily. TrmE GTPase family. In terms of assembly, homodimer. Heterotetramer of two MnmE and two MnmG subunits. K(+) is required as a cofactor.

The protein localises to the cytoplasm. Exhibits a very high intrinsic GTPase hydrolysis rate. Involved in the addition of a carboxymethylaminomethyl (cmnm) group at the wobble position (U34) of certain tRNAs, forming tRNA-cmnm(5)s(2)U34. The polypeptide is tRNA modification GTPase MnmE (Helicobacter pylori (strain J99 / ATCC 700824) (Campylobacter pylori J99)).